The sequence spans 96 residues: (4S)-4-hydroxy-5-phosphonooxypentane-2,3-dione isomerase (96 aa).

Residues 2–91 form the ABM domain; it reads HVTLVEINVH…MTGPRKKRLF (90 aa).

This sequence belongs to the LsrG family. As to quaternary structure, homodimer.

The protein localises to the cytoplasm. The catalysed reaction is (2S)-2-hydroxy-3,4-dioxopentyl phosphate = 3-hydroxy-2,4-dioxopentyl phosphate. Involved in the degradation of phospho-AI-2, thereby terminating induction of the lsr operon and closing the AI-2 signaling cycle. Catalyzes the conversion of (4S)-4-hydroxy-5-phosphonooxypentane-2,3-dione (P-DPD) to 3-hydroxy-5-phosphonooxypentane-2,4-dione (P-HPD). The sequence is that of (4S)-4-hydroxy-5-phosphonooxypentane-2,3-dione isomerase from Escherichia coli O157:H7.